The chain runs to 73 residues: Nodulin-1 (73 aa).

The signal sequence occupies residues 1–23; it reads MERKTLASLCFFLIVLLAAQVVA. 3 disulfides stabilise this stretch: C39–C64, C49–C71, and C53–C73.

As to expression, expressed in nodules, but not in leaves, stems, flowers and roots. In developing nodules, expressed close to the infection threads.

Its subcellular location is the secreted. Its function is as follows. Nodulation-related protein probably involved in the infection process. The sequence is that of Nodulin-1 (N1) from Medicago truncatula (Barrel medic).